The sequence spans 314 residues: Carbamate kinase (314 aa).

The protein belongs to the carbamate kinase family. Homodimer.

The protein resides in the cytoplasm. The catalysed reaction is hydrogencarbonate + NH4(+) + ATP = carbamoyl phosphate + ADP + H2O + H(+). Its function is as follows. Carbamate kinase that plays a biosynthetic role in that it produces carbamoyl-phosphate. This is Carbamate kinase (cpkA) from Pyrococcus furiosus (strain ATCC 43587 / DSM 3638 / JCM 8422 / Vc1).